Reading from the N-terminus, the 574-residue chain is 2-succinyl-5-enolpyruvyl-6-hydroxy-3-cyclohexene-1-carboxylate synthase (574 aa).

The protein belongs to the TPP enzyme family. MenD subfamily. Homodimer. The cofactor is Mg(2+). It depends on Mn(2+) as a cofactor. Thiamine diphosphate serves as cofactor.

It catalyses the reaction isochorismate + 2-oxoglutarate + H(+) = 5-enolpyruvoyl-6-hydroxy-2-succinyl-cyclohex-3-ene-1-carboxylate + CO2. The protein operates within quinol/quinone metabolism; 1,4-dihydroxy-2-naphthoate biosynthesis; 1,4-dihydroxy-2-naphthoate from chorismate: step 2/7. It participates in quinol/quinone metabolism; menaquinone biosynthesis. Catalyzes the thiamine diphosphate-dependent decarboxylation of 2-oxoglutarate and the subsequent addition of the resulting succinic semialdehyde-thiamine pyrophosphate anion to isochorismate to yield 2-succinyl-5-enolpyruvyl-6-hydroxy-3-cyclohexene-1-carboxylate (SEPHCHC). This is 2-succinyl-5-enolpyruvyl-6-hydroxy-3-cyclohexene-1-carboxylate synthase from Vibrio atlanticus (strain LGP32) (Vibrio splendidus (strain Mel32)).